Consider the following 121-residue polypeptide: Basic phospholipase A2 3 (121 aa).

7 cysteine pairs are disulfide-bonded: C26/C115, C28/C44, C43/C95, C49/C121, C50/C88, C57/C81, and C75/C86. Ca(2+) contacts are provided by Y27, G29, and G31. H47 is a catalytic residue. Residue D48 coordinates Ca(2+). D89 is an active-site residue.

The protein belongs to the phospholipase A2 family. Group II subfamily. D49 sub-subfamily. Ca(2+) is required as a cofactor. As to expression, expressed by the venom gland.

It localises to the secreted. The enzyme catalyses a 1,2-diacyl-sn-glycero-3-phosphocholine + H2O = a 1-acyl-sn-glycero-3-phosphocholine + a fatty acid + H(+). PLA2 catalyzes the calcium-dependent hydrolysis of the 2-acyl groups in 3-sn-phosphoglycerides. The chain is Basic phospholipase A2 3 from Daboia russelii (Russel's viper).